Here is a 689-residue protein sequence, read N- to C-terminus: tRNA 5-methylaminomethyl-2-thiouridine biosynthesis bifunctional protein MnmC (689 aa).

The tract at residues 1 to 245 (MNQRPIQTAT…KREMLTGTLP (245 aa)) is tRNA (mnm(5)s(2)U34)-methyltransferase. Residues 270–689 (IGGGIVSALT…RSPATQESSR (420 aa)) are FAD-dependent cmnm(5)s(2)U34 oxidoreductase.

The protein in the N-terminal section; belongs to the methyltransferase superfamily. tRNA (mnm(5)s(2)U34)-methyltransferase family. This sequence in the C-terminal section; belongs to the DAO family. The cofactor is FAD.

Its subcellular location is the cytoplasm. The catalysed reaction is 5-aminomethyl-2-thiouridine(34) in tRNA + S-adenosyl-L-methionine = 5-methylaminomethyl-2-thiouridine(34) in tRNA + S-adenosyl-L-homocysteine + H(+). Its function is as follows. Catalyzes the last two steps in the biosynthesis of 5-methylaminomethyl-2-thiouridine (mnm(5)s(2)U) at the wobble position (U34) in tRNA. Catalyzes the FAD-dependent demodification of cmnm(5)s(2)U34 to nm(5)s(2)U34, followed by the transfer of a methyl group from S-adenosyl-L-methionine to nm(5)s(2)U34, to form mnm(5)s(2)U34. This Yersinia pseudotuberculosis serotype I (strain IP32953) protein is tRNA 5-methylaminomethyl-2-thiouridine biosynthesis bifunctional protein MnmC.